The primary structure comprises 321 residues: Corticotropin-releasing factor-binding protein (321 aa).

A signal peptide spans 1-21; sequence MTPASRPDWCLILLFLAVLRG. 5 cysteine pairs are disulfide-bonded: C59-C80, C103-C140, C182-C204, C237-C264, and C277-C317. Residue N203 is glycosylated (N-linked (GlcNAc...) asparagine).

The protein belongs to the CRF-binding protein family.

The protein resides in the secreted. Its function is as follows. Binds CRF and inactivates it. May prevent inappropriate pituitary-adrenal stimulation in pregnancy. This Xenopus laevis (African clawed frog) protein is Corticotropin-releasing factor-binding protein (crhbp).